A 132-amino-acid polypeptide reads, in one-letter code: Small ribosomal subunit protein uS8 (132 aa).

The protein belongs to the universal ribosomal protein uS8 family. Part of the 30S ribosomal subunit. Contacts proteins S5 and S12.

Functionally, one of the primary rRNA binding proteins, it binds directly to 16S rRNA central domain where it helps coordinate assembly of the platform of the 30S subunit. The chain is Small ribosomal subunit protein uS8 from Acetivibrio thermocellus (strain ATCC 27405 / DSM 1237 / JCM 9322 / NBRC 103400 / NCIMB 10682 / NRRL B-4536 / VPI 7372) (Clostridium thermocellum).